The chain runs to 285 residues: tRNA-cytidine(32) 2-sulfurtransferase (285 aa).

The short motif at serine 49–serine 54 is the PP-loop motif element. Residues cysteine 124, cysteine 127, and cysteine 215 each coordinate [4Fe-4S] cluster.

It belongs to the TtcA family. As to quaternary structure, homodimer. It depends on Mg(2+) as a cofactor. [4Fe-4S] cluster is required as a cofactor.

It is found in the cytoplasm. The enzyme catalyses cytidine(32) in tRNA + S-sulfanyl-L-cysteinyl-[cysteine desulfurase] + AH2 + ATP = 2-thiocytidine(32) in tRNA + L-cysteinyl-[cysteine desulfurase] + A + AMP + diphosphate + H(+). It functions in the pathway tRNA modification. Functionally, catalyzes the ATP-dependent 2-thiolation of cytidine in position 32 of tRNA, to form 2-thiocytidine (s(2)C32). The sulfur atoms are provided by the cysteine/cysteine desulfurase (IscS) system. The polypeptide is tRNA-cytidine(32) 2-sulfurtransferase (Hahella chejuensis (strain KCTC 2396)).